Reading from the N-terminus, the 383-residue chain is uncharacterized protein (383 aa).

It belongs to the peptidase M20 family.

This is an uncharacterized protein from Staphylococcus haemolyticus (strain JCSC1435).